A 398-amino-acid chain; its full sequence is Argininosuccinate synthase (398 aa).

8–16 (AYSGGLDTS) is a binding site for ATP. Tyr87 provides a ligand contact to L-citrulline. Gly117 contributes to the ATP binding site. The L-aspartate site is built by Thr119, Asn123, and Asp124. Residue Asn123 participates in L-citrulline binding. Residues Arg127, Ser175, Glu260, and Tyr272 each contribute to the L-citrulline site.

This sequence belongs to the argininosuccinate synthase family. Type 1 subfamily. In terms of assembly, homotetramer.

The protein localises to the cytoplasm. The enzyme catalyses L-citrulline + L-aspartate + ATP = 2-(N(omega)-L-arginino)succinate + AMP + diphosphate + H(+). It functions in the pathway amino-acid biosynthesis; L-arginine biosynthesis; L-arginine from L-ornithine and carbamoyl phosphate: step 2/3. The protein is Argininosuccinate synthase of Mycobacterium ulcerans (strain Agy99).